The chain runs to 285 residues: Troponin T, cardiac muscle (285 aa).

Positions 1-58 (MSDVEEAVEEYEEQEEAAEEEHEEAVEEEAGGEAEAGEPCTAEDGEEEEGREAEDGPV) are enriched in acidic residues. Disordered stretches follow at residues 1-83 (MSDV…GERV) and 111-206 (RKKE…EKKK). Residue S2 is modified to N-acetylserine. The residue at position 2 (S2) is a Phosphoserine; by CK2. The span at 66–77 (RPFMPNLVPPKI) shows a compositional bias: pro residues. Basic and acidic residues-rich tracts occupy residues 111-171 (RKKE…DEAR) and 190-206 (QTER…EKKK). T191 carries the phosphothreonine; by PKC/PRKCA modification. Residue S195 is modified to Phosphoserine; by PKC/PRKCA. T200 carries the phosphothreonine; by PKC/PRKCA and RAF1 modification. At T281 the chain carries Phosphothreonine; by PKC/PRKCA.

Belongs to the troponin T family. In terms of processing, the N-terminus is blocked. Post-translationally, phosphorylation at Thr-200 by PRKCA induces significant reduction in myofilament calcium sensitivity and actomyosin ATPase activity.

In terms of biological role, troponin T is the tropomyosin-binding subunit of troponin, the thin filament regulatory complex which confers calcium-sensitivity to striated muscle actomyosin ATPase activity. The sequence is that of Troponin T, cardiac muscle (TNNT2) from Bos taurus (Bovine).